Reading from the N-terminus, the 291-residue chain is Acetyl-coenzyme A carboxylase carboxyl transferase subunit beta (291 aa).

The CoA carboxyltransferase N-terminal domain maps to 36–291 (MWVKCDGCGK…KILVIHGRGN (256 aa)). Zn(2+) contacts are provided by C40, C43, C59, and C62. A C4-type zinc finger spans residues 40 to 62 (CDGCGKVLYKNDMEKNNKVCYHC).

The protein belongs to the AccD/PCCB family. As to quaternary structure, acetyl-CoA carboxylase is a heterohexamer composed of biotin carboxyl carrier protein (AccB), biotin carboxylase (AccC) and two subunits each of ACCase subunit alpha (AccA) and ACCase subunit beta (AccD). Zn(2+) is required as a cofactor.

The protein resides in the cytoplasm. It catalyses the reaction N(6)-carboxybiotinyl-L-lysyl-[protein] + acetyl-CoA = N(6)-biotinyl-L-lysyl-[protein] + malonyl-CoA. It participates in lipid metabolism; malonyl-CoA biosynthesis; malonyl-CoA from acetyl-CoA: step 1/1. Its function is as follows. Component of the acetyl coenzyme A carboxylase (ACC) complex. Biotin carboxylase (BC) catalyzes the carboxylation of biotin on its carrier protein (BCCP) and then the CO(2) group is transferred by the transcarboxylase to acetyl-CoA to form malonyl-CoA. In Clostridium kluyveri (strain NBRC 12016), this protein is Acetyl-coenzyme A carboxylase carboxyl transferase subunit beta.